The sequence spans 251 residues: B3 domain-containing protein REM7 (251 aa).

DNA-binding regions (TF-B3) lie at residues N11–S103 and C170–N251.

The protein localises to the nucleus. The sequence is that of B3 domain-containing protein REM7 (REM7) from Arabidopsis thaliana (Mouse-ear cress).